We begin with the raw amino-acid sequence, 2211 residues long: Nonribosomal peptide synthetase 13 (2211 aa).

The interval 76–475 is adenylation 1; the sequence is TYAELDSLSD…IEHHLQLTLP (400 aa). The Carrier 1 domain occupies 594-671; it reads PPSTPKEATI…EQSKRAGLIQ (78 aa). Serine 631 carries the O-(pantetheine 4'-phosphoryl)serine modification. Residues 710-975 are condensation 1; sequence EDIYPCTALQ…IATVPTRIRV (266 aa). The interval 1169–1563 is adenylation 2; the sequence is TYRELWAHSS…LGAVEASVMR (395 aa). A Carrier 2 domain is found at 1677 to 1756; the sequence is PMSDDNERRL…RSRHLITEQA (80 aa). Serine 1714 carries the post-translational modification O-(pantetheine 4'-phosphoryl)serine. A condensation 2 region spans residues 1814 to 2069; sequence HFQFDLSGAV…CTNYIPYRLS (256 aa).

The protein belongs to the NRP synthetase family.

It catalyses the reaction L-proline + L-tryptophan + 2 ATP = brevianamide F + 2 AMP + 2 diphosphate + 2 H(+). It participates in mycotoxin biosynthesis. Its function is as follows. Nonribosomal peptide synthetase; part of the gene cluster that mediates the biosynthesis of fumitremorgins, indole alkaloids that carry not only intriguing chemical structures, but also interesting biological and pharmacological activities. The biosynthesis of fumitremorgin-type alkaloids begins by condensation of the two amino acids L-tryptophan and L-proline to brevianamide F, catalyzed by the non-ribosomal peptide synthetase ftmA. Brevianamide F is then prenylated by the prenyltransferase ftmPT1/ftmB in the presence of dimethylallyl diphosphate, resulting in the formation of tryprostatin B. The three cytochrome P450 monooxygenases, ftmP450-1/ftmC, ftmP450-2/ftmE and ftmP450-3/FtmG, are responsible for the conversion of tryprostatin B to 6-hydroxytryprostatin B, tryprostatin A to fumitremorgin C and fumitremorgin C to 12,13-dihydroxyfumitremorgin C, respectively. The putative methyltransferase ftmMT/ftmD is expected for the conversion of 6-hydroxytryprostatin B to tryprostatin A. FtmPT2/FtmH catalyzes the prenylation of 12,13-dihydroxyfumitre-morgin C in the presence of dimethylallyl diphosphate, resulting in the formation of fumitremorgin B. Fumitremorgin B is further converted to verruculogen by ftmOx1/ftmF via the insertion of an endoperoxide bond between the two prenyl moieties. In some fungal species, verruculogen is further converted to fumitremorgin A, but the enzymes involved in this step have not been identified yet. In Aspergillus fumigatus (strain ATCC MYA-4609 / CBS 101355 / FGSC A1100 / Af293) (Neosartorya fumigata), this protein is Nonribosomal peptide synthetase 13.